The primary structure comprises 83 residues: Small ribosomal subunit protein bS20 (83 aa).

Residues M1 to A11 are compositionally biased toward basic residues. Residues M1–D44 form a disordered region.

This sequence belongs to the bacterial ribosomal protein bS20 family.

Binds directly to 16S ribosomal RNA. The sequence is that of Small ribosomal subunit protein bS20 from Desulforapulum autotrophicum (strain ATCC 43914 / DSM 3382 / VKM B-1955 / HRM2) (Desulfobacterium autotrophicum).